Consider the following 320-residue polypeptide: GTPase Era (320 aa).

Residues His-25–Lys-193 form the Era-type G domain. Residues Gly-33–Ser-40 form a G1 region. A GTP-binding site is contributed by Gly-33–Ser-40. Residues Gln-59–His-63 form a G2 region. Residues Asp-80 to Gly-83 are G3. GTP contacts are provided by residues Asp-80–Leu-84 and Asn-142–Asp-145. The G4 stretch occupies residues Asn-142–Asp-145. The tract at residues Ile-172–Ala-174 is G5. Positions Val-216–Ser-302 constitute a KH type-2 domain.

Belongs to the TRAFAC class TrmE-Era-EngA-EngB-Septin-like GTPase superfamily. Era GTPase family. In terms of assembly, monomer.

Its subcellular location is the cytoplasm. It localises to the cell inner membrane. An essential GTPase that binds both GDP and GTP, with rapid nucleotide exchange. Plays a role in 16S rRNA processing and 30S ribosomal subunit biogenesis and possibly also in cell cycle regulation and energy metabolism. The polypeptide is GTPase Era (Vibrio vulnificus (strain CMCP6)).